A 269-amino-acid chain; its full sequence is Pyrroline-5-carboxylate reductase (269 aa).

Belongs to the pyrroline-5-carboxylate reductase family.

It is found in the cytoplasm. It catalyses the reaction L-proline + NADP(+) = (S)-1-pyrroline-5-carboxylate + NADPH + 2 H(+). It carries out the reaction L-proline + NAD(+) = (S)-1-pyrroline-5-carboxylate + NADH + 2 H(+). Its pathway is amino-acid biosynthesis; L-proline biosynthesis; L-proline from L-glutamate 5-semialdehyde: step 1/1. Its activity is regulated as follows. Inhibited by p-chloromercuribenzoate. Functionally, catalyzes the reduction of 1-pyrroline-5-carboxylate (PCA) to L-proline. Does not catalyze the reverse reaction. In Escherichia coli (strain K12), this protein is Pyrroline-5-carboxylate reductase.